The primary structure comprises 1119 residues: DNA-directed RNA polymerase subunit beta (1119 aa).

It belongs to the RNA polymerase beta chain family. In terms of assembly, the RNAP catalytic core consists of 2 alpha, 1 beta, 1 beta' and 1 omega subunit. When a sigma factor is associated with the core the holoenzyme is formed, which can initiate transcription.

The enzyme catalyses RNA(n) + a ribonucleoside 5'-triphosphate = RNA(n+1) + diphosphate. Functionally, DNA-dependent RNA polymerase catalyzes the transcription of DNA into RNA using the four ribonucleoside triphosphates as substrates. This Thermus thermophilus (strain ATCC BAA-163 / DSM 7039 / HB27) protein is DNA-directed RNA polymerase subunit beta.